A 429-amino-acid polypeptide reads, in one-letter code: Glutamate-1-semialdehyde 2,1-aminomutase 2 (429 aa).

Lysine 268 carries the N6-(pyridoxal phosphate)lysine modification.

Belongs to the class-III pyridoxal-phosphate-dependent aminotransferase family. HemL subfamily. As to quaternary structure, homodimer. Pyridoxal 5'-phosphate serves as cofactor.

Its subcellular location is the cytoplasm. It carries out the reaction (S)-4-amino-5-oxopentanoate = 5-aminolevulinate. The protein operates within porphyrin-containing compound metabolism; protoporphyrin-IX biosynthesis; 5-aminolevulinate from L-glutamyl-tRNA(Glu): step 2/2. The protein is Glutamate-1-semialdehyde 2,1-aminomutase 2 of Bacillus thuringiensis (strain Al Hakam).